Consider the following 233-residue polypeptide: MNKPIIALDFQTYEEVEQFLAKFSGEALSVKVGMELFYSNGPIIVEKIKQQNHEIFLDLKLHDIPNTVKSAMVGLAKLGVDMVNVHAAGGKNMMEAALEGLEIGSGSGKRPKIIAVTQLTSTSEASMQSEQLIKTSLLESVLHYSALTNQAGLNGVVCSALEAEAIKQQNGADFLRVTPGIRLASDAADDQIRVVTPEKARLIGSTDIVVGRSITRANDPVAAYNQVLKEWNV.

Residues Asp-9, Lys-31, 58–67 (DLKLHDIPNT), Thr-120, Arg-182, Gln-191, Gly-211, and Arg-212 contribute to the substrate site. Residue Lys-60 is the Proton donor of the active site.

The protein belongs to the OMP decarboxylase family. Type 1 subfamily. In terms of assembly, homodimer.

The enzyme catalyses orotidine 5'-phosphate + H(+) = UMP + CO2. It functions in the pathway pyrimidine metabolism; UMP biosynthesis via de novo pathway; UMP from orotate: step 2/2. Functionally, catalyzes the decarboxylation of orotidine 5'-monophosphate (OMP) to uridine 5'-monophosphate (UMP). The sequence is that of Orotidine 5'-phosphate decarboxylase from Listeria monocytogenes serotype 4a (strain HCC23).